Reading from the N-terminus, the 288-residue chain is GDSL esterase/lipase At3g43550 (288 aa).

The first 19 residues, 1–19 (MKLQIIWLALVLIAVETYA), serve as a signal peptide directing secretion. Residue asparagine 25 is glycosylated (N-linked (GlcNAc...) asparagine). Catalysis depends on serine 37, which acts as the Nucleophile.

Belongs to the 'GDSL' lipolytic enzyme family.

It localises to the secreted. The protein is GDSL esterase/lipase At3g43550 of Arabidopsis thaliana (Mouse-ear cress).